The sequence spans 242 residues: Probable transcriptional regulatory protein NMB1648 (242 aa).

This sequence belongs to the TACO1 family.

The protein localises to the cytoplasm. This Neisseria meningitidis serogroup B (strain ATCC BAA-335 / MC58) protein is Probable transcriptional regulatory protein NMB1648.